The sequence spans 175 residues: Peptide deformylase (175 aa).

Fe cation-binding residues include cysteine 92 and histidine 134. The active site involves glutamate 135. A Fe cation-binding site is contributed by histidine 138.

This sequence belongs to the polypeptide deformylase family. The cofactor is Fe(2+).

It carries out the reaction N-terminal N-formyl-L-methionyl-[peptide] + H2O = N-terminal L-methionyl-[peptide] + formate. Its function is as follows. Removes the formyl group from the N-terminal Met of newly synthesized proteins. Requires at least a dipeptide for an efficient rate of reaction. N-terminal L-methionine is a prerequisite for activity but the enzyme has broad specificity at other positions. This is Peptide deformylase from Blochmanniella floridana.